A 975-amino-acid polypeptide reads, in one-letter code: Lateral signaling target protein 2 homolog (975 aa).

Disordered regions lie at residues 299–458 (PLGS…GTDE) and 504–523 (YGTA…PSTS). Low complexity-rich tracts occupy residues 302 to 352 (SSSI…TTNT), 365 to 376 (NNHNSNSNSSSN), 383 to 400 (TLRS…TPTA), and 408 to 429 (PSHS…PADW). Residues 430-458 (SDGDDEDEDDDDIDVDEEDPESSDDGTDE) show a composition bias toward acidic residues. S540 and S541 each carry phosphoserine. 2 disordered regions span residues 556 to 633 (EEHM…SSLS) and 740 to 891 (DNVF…SPPA). Basic residues predominate over residues 564–602 (GRHHRHHQSHHHHHHHRHSHQHQHRQPHPHRTTRSGRKR). A compositionally biased stretch (low complexity) spans 621-633 (LASGDTSAASSLS). Over residues 751–770 (ATGQRHSAGASMQRNNTIDL) the composition is skewed to polar residues. S796 carries the post-translational modification Phosphoserine. Low complexity-rich tracts occupy residues 802–860 (AASS…PVSA) and 877–890 (PSSA…LSPP). The FYVE-type zinc finger occupies 895 to 955 (DGKAPRCMAC…VCRDCYVREV (61 aa)). Zn(2+) contacts are provided by C901, C904, C917, C920, C925, C928, C947, and C950.

The protein belongs to the lst-2 family.

In terms of biological role, negative regulator of epidermal growth factor receptor (EGFR) signaling. This chain is Lateral signaling target protein 2 homolog, found in Drosophila sechellia (Fruit fly).